The following is a 312-amino-acid chain: Fibrinogen-like protein 1 (312 aa).

An N-terminal signal peptide occupies residues Met1 to Ala22. Residues Leu23–Gln61 are a coiled coil. In terms of domain architecture, Fibrinogen C-terminal spans Leu74–Asp306. Cystine bridges form between Cys83–Cys112 and Cys248–Cys261.

Homodimer. Interacts (via the Fibrinogen C-terminal domain) with LAG3 (via Ig-like domains 1 and 2). Under normal conditions, liver-specific.

Its subcellular location is the secreted. Immune suppressive molecule that inhibits antigen-specific T-cell activation by acting as a major ligand of LAG3. Responsible for LAG3 T-cell inhibitory function. Binds LAG3 independently from MHC class II (MHC-II). Secreted by, and promotes growth of, hepatocytes. This is Fibrinogen-like protein 1 from Homo sapiens (Human).